A 266-amino-acid chain; its full sequence is Thymidylate synthase (266 aa).

Arginine 24 serves as a coordination point for dUMP. Histidine 54 contacts (6R)-5,10-methylene-5,6,7,8-tetrahydrofolate. Position 129-130 (129-130 (RR)) interacts with dUMP. Cysteine 149 serves as the catalytic Nucleophile. DUMP is bound by residues 169-172 (RSAD), asparagine 180, and 210-212 (HIY). (6R)-5,10-methylene-5,6,7,8-tetrahydrofolate is bound at residue aspartate 172. Alanine 265 contributes to the (6R)-5,10-methylene-5,6,7,8-tetrahydrofolate binding site.

It belongs to the thymidylate synthase family. Bacterial-type ThyA subfamily. As to quaternary structure, homodimer.

The protein resides in the cytoplasm. The enzyme catalyses dUMP + (6R)-5,10-methylene-5,6,7,8-tetrahydrofolate = 7,8-dihydrofolate + dTMP. The protein operates within pyrimidine metabolism; dTTP biosynthesis. Catalyzes the reductive methylation of 2'-deoxyuridine-5'-monophosphate (dUMP) to 2'-deoxythymidine-5'-monophosphate (dTMP) while utilizing 5,10-methylenetetrahydrofolate (mTHF) as the methyl donor and reductant in the reaction, yielding dihydrofolate (DHF) as a by-product. This enzymatic reaction provides an intracellular de novo source of dTMP, an essential precursor for DNA biosynthesis. In Mycobacterium sp. (strain KMS), this protein is Thymidylate synthase.